A 231-amino-acid chain; its full sequence is Chalcone--flavanone isomerase (231 aa).

Residues Thr-46, Asn-112, and Ser-189 each coordinate substrate.

It belongs to the chalcone isomerase family.

It carries out the reaction a chalcone = a flavanone.. Its pathway is secondary metabolite biosynthesis; flavonoid biosynthesis. Catalyzes the intramolecular cyclization of bicyclic chalcones into tricyclic (S)-flavanones. Responsible for the isomerization of 4,2',4',6'-tetrahydroxychalcone (also termed chalcone) into naringenin. The polypeptide is Chalcone--flavanone isomerase (CHI) (Hordeum vulgare (Barley)).